We begin with the raw amino-acid sequence, 823 residues long: Putative ankyrin repeat domain-containing protein 20A3 (823 aa).

ANK repeat units lie at residues 66-95 (QHRT…QIDV), 99-128 (ENRT…NPNL), 132-161 (YGNT…HIEA), 165-194 (DNNT…SSHA), and 198-227 (LRRS…DVFA). Disordered stretches follow at residues 301 to 343 (VPEK…EVED) and 355 to 402 (VQTL…LSEN). Over residues 372–384 (QERHERSEKKQPQ) the composition is skewed to basic and acidic residues. 3 coiled-coil regions span residues 431–480 (KKLK…KQLE), 571–724 (AFRY…NNST), and 776–805 (LVLE…EKTE).

This chain is Putative ankyrin repeat domain-containing protein 20A3, found in Homo sapiens (Human).